A 445-amino-acid polypeptide reads, in one-letter code: MGKKIVILGGGESGIGTAILAKKNGYDVFLSDKGKIKDKYKEVLKHIEIEWEDEKHTESKIFDADVVMKSPGIPDKAPMIVKLKEKGISVVSEIEFASWFSEVPVIGITGSNGKTTVTNLVQHLLKEGGINSGMGGNIGNSYAKMVAEEMHDWFVLELSSFQLDGIEKFKPHIAILTNITPDHLDRYDYKLENYIASKFRIAENQTEEDYFIYDADDKNITDWLEKNPVRSQKLPFSIEKKIENGAYIENENIVVTINNTKFTMPTSELALQGKHNAKNAMAASMVSQLLRIRKQTIRESMASFQGVEHRLEKVLKINNVLYINDSKATNVNATFYALESMESETVWILGGVDKGNVYDDLLPLVNEKVKAIICLGVDNEKIVSAFGNIVDTMVETTSMSEAVQMAYRLSDKGDNVLLSPACASFDLFENYEDRGRQFKEAVRNL.

Residue 110-116 (GSNGKTT) participates in ATP binding.

It belongs to the MurCDEF family.

It is found in the cytoplasm. The enzyme catalyses UDP-N-acetyl-alpha-D-muramoyl-L-alanine + D-glutamate + ATP = UDP-N-acetyl-alpha-D-muramoyl-L-alanyl-D-glutamate + ADP + phosphate + H(+). Its pathway is cell wall biogenesis; peptidoglycan biosynthesis. In terms of biological role, cell wall formation. Catalyzes the addition of glutamate to the nucleotide precursor UDP-N-acetylmuramoyl-L-alanine (UMA). This is UDP-N-acetylmuramoylalanine--D-glutamate ligase from Christiangramia forsetii (strain DSM 17595 / CGMCC 1.15422 / KT0803) (Gramella forsetii).